The primary structure comprises 119 residues: MEFGLSWVFLVAILKGVQCEVQLVESGGGLVQPGRSLRLSCTASGFTFGDYAMSWVRQAPGKGLEWVGFIRSKAYGGTTEYAASVKGRFTISRDDSKSIAYLQMNSLKTEDTAVYYCTR.

A signal peptide spans Met1–Cys19. The segment at Glu20 to Ser44 is framework-1. The Ig-like domain occupies Glu20 to Arg119. Cys41 and Cys117 are joined by a disulfide. The tract at residues Gly45–Ala52 is complementarity-determining-1. The tract at residues Met53–Phe69 is framework-2. A complementarity-determining-2 region spans residues Ile70 to Thr79. A framework-3 region spans residues Glu80–Cys117. The interval Thr118 to Arg119 is complementarity-determining-3.

Immunoglobulins are composed of two identical heavy chains and two identical light chains; disulfide-linked.

The protein resides in the secreted. It localises to the cell membrane. In terms of biological role, v region of the variable domain of immunoglobulin heavy chains that participates in the antigen recognition. Immunoglobulins, also known as antibodies, are membrane-bound or secreted glycoproteins produced by B lymphocytes. In the recognition phase of humoral immunity, the membrane-bound immunoglobulins serve as receptors which, upon binding of a specific antigen, trigger the clonal expansion and differentiation of B lymphocytes into immunoglobulins-secreting plasma cells. Secreted immunoglobulins mediate the effector phase of humoral immunity, which results in the elimination of bound antigens. The antigen binding site is formed by the variable domain of one heavy chain, together with that of its associated light chain. Thus, each immunoglobulin has two antigen binding sites with remarkable affinity for a particular antigen. The variable domains are assembled by a process called V-(D)-J rearrangement and can then be subjected to somatic hypermutations which, after exposure to antigen and selection, allow affinity maturation for a particular antigen. The chain is Immunoglobulin heavy variable 3-49 from Homo sapiens (Human).